The following is a 79-amino-acid chain: Defensin-like protein 117 (79 aa).

Positions 1–24 are cleaved as a signal peptide; the sequence is MTTTKTMLVAFVLTLFFVISSVHC. 4 disulfide bridges follow: Cys40-Cys75, Cys46-Cys68, Cys53-Cys73, and Cys57-Cys74.

The protein belongs to the DEFL family.

It localises to the secreted. This chain is Defensin-like protein 117, found in Arabidopsis thaliana (Mouse-ear cress).